We begin with the raw amino-acid sequence, 148 residues long: uncharacterized protein (148 aa).

Residues 83-148 (QPAVIPPVKA…TKKSNKKTRS (66 aa)) form a disordered region. Basic residues-rich tracts occupy residues 92–103 (AKPKATKKKTPV) and 113–124 (KQTKPKQSKPKS).

This is an uncharacterized protein from Mycoplasma genitalium (strain ATCC 33530 / DSM 19775 / NCTC 10195 / G37) (Mycoplasmoides genitalium).